The primary structure comprises 197 residues: Segregation and condensation protein B (197 aa).

This sequence belongs to the ScpB family. As to quaternary structure, homodimer. Homodimerization may be required to stabilize the binding of ScpA to the Smc head domains. Component of a cohesin-like complex composed of ScpA, ScpB and the Smc homodimer, in which ScpA and ScpB bind to the head domain of Smc. The presence of the three proteins is required for the association of the complex with DNA.

Its subcellular location is the cytoplasm. Its function is as follows. Participates in chromosomal partition during cell division. May act via the formation of a condensin-like complex containing Smc and ScpA that pull DNA away from mid-cell into both cell halves. This is Segregation and condensation protein B from Syntrophotalea carbinolica (strain DSM 2380 / NBRC 103641 / GraBd1) (Pelobacter carbinolicus).